The chain runs to 458 residues: Argininosuccinate lyase (458 aa).

It belongs to the lyase 1 family. Argininosuccinate lyase subfamily.

It localises to the cytoplasm. The enzyme catalyses 2-(N(omega)-L-arginino)succinate = fumarate + L-arginine. It functions in the pathway amino-acid biosynthesis; L-arginine biosynthesis; L-arginine from L-ornithine and carbamoyl phosphate: step 3/3. The protein is Argininosuccinate lyase of Salmonella typhimurium (strain LT2 / SGSC1412 / ATCC 700720).